We begin with the raw amino-acid sequence, 206 residues long: Large ribosomal subunit protein uL4 (206 aa).

Residues 46–78 (GNRAQKDREQVKHTTKKPWRQKGTGRARAGMSS) are disordered. The segment covering 58–70 (HTTKKPWRQKGTG) has biased composition (basic residues).

This sequence belongs to the universal ribosomal protein uL4 family. Part of the 50S ribosomal subunit.

Its function is as follows. One of the primary rRNA binding proteins, this protein initially binds near the 5'-end of the 23S rRNA. It is important during the early stages of 50S assembly. It makes multiple contacts with different domains of the 23S rRNA in the assembled 50S subunit and ribosome. Functionally, forms part of the polypeptide exit tunnel. This is Large ribosomal subunit protein uL4 from Burkholderia cenocepacia (strain ATCC BAA-245 / DSM 16553 / LMG 16656 / NCTC 13227 / J2315 / CF5610) (Burkholderia cepacia (strain J2315)).